A 668-amino-acid polypeptide reads, in one-letter code: tRNA 5-methylaminomethyl-2-thiouridine biosynthesis bifunctional protein MnmC (668 aa).

The tRNA (mnm(5)s(2)U34)-methyltransferase stretch occupies residues 1–245; it reads MKHYSIQPAN…KREMLCGVME (245 aa). Positions 270–668 are FAD-dependent cmnm(5)s(2)U34 oxidoreductase; sequence IGGGIASALL…LLKGKAVKAG (399 aa).

In the N-terminal section; belongs to the methyltransferase superfamily. tRNA (mnm(5)s(2)U34)-methyltransferase family. The protein in the C-terminal section; belongs to the DAO family. The cofactor is FAD.

The protein localises to the cytoplasm. The catalysed reaction is 5-aminomethyl-2-thiouridine(34) in tRNA + S-adenosyl-L-methionine = 5-methylaminomethyl-2-thiouridine(34) in tRNA + S-adenosyl-L-homocysteine + H(+). Functionally, catalyzes the last two steps in the biosynthesis of 5-methylaminomethyl-2-thiouridine (mnm(5)s(2)U) at the wobble position (U34) in tRNA. Catalyzes the FAD-dependent demodification of cmnm(5)s(2)U34 to nm(5)s(2)U34, followed by the transfer of a methyl group from S-adenosyl-L-methionine to nm(5)s(2)U34, to form mnm(5)s(2)U34. This chain is tRNA 5-methylaminomethyl-2-thiouridine biosynthesis bifunctional protein MnmC, found in Shigella dysenteriae serotype 1 (strain Sd197).